A 715-amino-acid chain; its full sequence is Fatty acid oxidation complex subunit alpha (715 aa).

An enoyl-CoA hydratase/isomerase region spans residues 1-190 (MIYEGKAITV…KVGAVDAVVA (190 aa)). Asp-297 provides a ligand contact to substrate. Residues 312–715 (KDVKQAAVLG…MAKNGQSFFG (404 aa)) are 3-hydroxyacyl-CoA dehydrogenase. Residues Met-325, Asp-344, 401–403 (VVE), Lys-408, and Ser-430 contribute to the NAD(+) site. His-451 functions as the For 3-hydroxyacyl-CoA dehydrogenase activity in the catalytic mechanism. Asn-454 contacts NAD(+). Positions 501 and 660 each coordinate substrate.

In the N-terminal section; belongs to the enoyl-CoA hydratase/isomerase family. It in the C-terminal section; belongs to the 3-hydroxyacyl-CoA dehydrogenase family. In terms of assembly, heterotetramer of two alpha chains (FadB) and two beta chains (FadA).

It carries out the reaction a (3S)-3-hydroxyacyl-CoA + NAD(+) = a 3-oxoacyl-CoA + NADH + H(+). It catalyses the reaction a (3S)-3-hydroxyacyl-CoA = a (2E)-enoyl-CoA + H2O. The catalysed reaction is a 4-saturated-(3S)-3-hydroxyacyl-CoA = a (3E)-enoyl-CoA + H2O. The enzyme catalyses (3S)-3-hydroxybutanoyl-CoA = (3R)-3-hydroxybutanoyl-CoA. It carries out the reaction a (3Z)-enoyl-CoA = a 4-saturated (2E)-enoyl-CoA. It catalyses the reaction a (3E)-enoyl-CoA = a 4-saturated (2E)-enoyl-CoA. The protein operates within lipid metabolism; fatty acid beta-oxidation. Functionally, involved in the aerobic and anaerobic degradation of long-chain fatty acids via beta-oxidation cycle. Catalyzes the formation of 3-oxoacyl-CoA from enoyl-CoA via L-3-hydroxyacyl-CoA. It can also use D-3-hydroxyacyl-CoA and cis-3-enoyl-CoA as substrate. This is Fatty acid oxidation complex subunit alpha from Pseudomonas fluorescens (strain ATCC BAA-477 / NRRL B-23932 / Pf-5).